Consider the following 158-residue polypeptide: Molybdopterin synthase catalytic subunit (158 aa).

Residues 107 to 108 (HR), K123, and 130 to 132 (KKE) contribute to the substrate site.

It belongs to the MoaE family. MOCS2B subfamily. Heterotetramer; composed of 2 small (mocs2s) and 2 large (mocs2l) subunits.

Its subcellular location is the cytoplasm. The catalysed reaction is 2 [molybdopterin-synthase sulfur-carrier protein]-C-terminal-Gly-aminoethanethioate + cyclic pyranopterin phosphate + H2O = molybdopterin + 2 [molybdopterin-synthase sulfur-carrier protein]-C-terminal Gly-Gly + 2 H(+). It functions in the pathway cofactor biosynthesis; molybdopterin biosynthesis. Functionally, catalytic subunit of the molybdopterin synthase complex, a complex that catalyzes the conversion of precursor Z into molybdopterin. Acts by mediating the incorporation of 2 sulfur atoms from thiocarboxylated mocs2s into precursor Z to generate a dithiolene group. The sequence is that of Molybdopterin synthase catalytic subunit (mocs2l) from Dictyostelium discoideum (Social amoeba).